The sequence spans 535 residues: CTP synthase (535 aa).

The amidoligase domain stretch occupies residues 1-268; that stretch reads MSTKYIFVTG…DQIVCDHLKL (268 aa). Serine 14 provides a ligand contact to CTP. Serine 14 serves as a coordination point for UTP. An ATP-binding site is contributed by 15-20; the sequence is SMGKGI. Residue tyrosine 55 coordinates L-glutamine. Aspartate 72 contacts ATP. 2 residues coordinate Mg(2+): aspartate 72 and glutamate 142. Residues 149–151, 189–194, and lysine 225 each bind CTP; these read DME and KTKIAQ. UTP-binding positions include 189–194 and lysine 225; that span reads KTKIAQ. The Glutamine amidotransferase type-1 domain maps to 293–535; sequence KIALVGKYVE…FIRVAVENSK (243 aa). Glycine 355 is a binding site for L-glutamine. The active-site Nucleophile; for glutamine hydrolysis is the cysteine 382. L-glutamine is bound by residues 383–386, glutamate 406, and arginine 464; that span reads LGMQ. Active-site residues include histidine 509 and glutamate 511.

This sequence belongs to the CTP synthase family. In terms of assembly, homotetramer.

It catalyses the reaction UTP + L-glutamine + ATP + H2O = CTP + L-glutamate + ADP + phosphate + 2 H(+). The catalysed reaction is L-glutamine + H2O = L-glutamate + NH4(+). The enzyme catalyses UTP + NH4(+) + ATP = CTP + ADP + phosphate + 2 H(+). It participates in pyrimidine metabolism; CTP biosynthesis via de novo pathway; CTP from UDP: step 2/2. Allosterically activated by GTP, when glutamine is the substrate; GTP has no effect on the reaction when ammonia is the substrate. The allosteric effector GTP functions by stabilizing the protein conformation that binds the tetrahedral intermediate(s) formed during glutamine hydrolysis. Inhibited by the product CTP, via allosteric rather than competitive inhibition. In terms of biological role, catalyzes the ATP-dependent amination of UTP to CTP with either L-glutamine or ammonia as the source of nitrogen. Regulates intracellular CTP levels through interactions with the four ribonucleotide triphosphates. This Lactococcus lactis subsp. lactis (strain IL1403) (Streptococcus lactis) protein is CTP synthase.